Reading from the N-terminus, the 119-residue chain is Large ribosomal subunit protein bL20 (119 aa).

Belongs to the bacterial ribosomal protein bL20 family.

Binds directly to 23S ribosomal RNA and is necessary for the in vitro assembly process of the 50S ribosomal subunit. It is not involved in the protein synthesizing functions of that subunit. This Rhodopseudomonas palustris (strain ATCC BAA-98 / CGA009) protein is Large ribosomal subunit protein bL20.